The following is a 138-amino-acid chain: MSGEEEENAAELKIGDEFLKAKCLMNCEVSLILEHKFEQLQQISEDPMNQVSQVFEKSLQYVKRFSRYKNPDAVRQVREILSRHQLTEFELCVLGNLCPETVEEAVAMVPSLKTKGRAHDDEAIEKMLNDLSLVKRFE.

Ser2 bears the N-acetylserine mark.

This sequence belongs to the eukaryotic RPB4 RNA polymerase subunit family. As to quaternary structure, component of the RNA polymerase II complex consisting of at least 12 subunits. Interacts with NRPB7.

The protein localises to the nucleus. Functionally, DNA-dependent RNA polymerase catalyzes the transcription of DNA into RNA using the four ribonucleoside triphosphates as substrates. Second largest component of RNA polymerase II which synthesizes mRNA precursors and many functional non-coding RNAs. Proposed to contribute to the polymerase catalytic activity and forms the polymerase active center together with the largest subunit. Pol II is the central component of the basal RNA polymerase II transcription machinery. It is composed of mobile elements that move relative to each other. The chain is DNA-directed RNA polymerase II subunit 4 (NRPB4) from Arabidopsis thaliana (Mouse-ear cress).